The chain runs to 463 residues: Cytoplasmic tRNA 2-thiolation protein 2 (463 aa).

This sequence belongs to the CTU2/NCS2 family.

The protein localises to the cytoplasm. Its pathway is tRNA modification; 5-methoxycarbonylmethyl-2-thiouridine-tRNA biosynthesis. In terms of biological role, plays a central role in 2-thiolation of mcm(5)S(2)U at tRNA wobble positions of tRNA(Lys), tRNA(Glu) and tRNA(Gln). May act by forming a heterodimer with NCS6 that ligates sulfur from thiocarboxylated URM1 onto the uridine of tRNAs at wobble position. Prior mcm(5) tRNA modification by the elongator complex is required for 2-thiolation. May also be involved in protein urmylation. The polypeptide is Cytoplasmic tRNA 2-thiolation protein 2 (Kluyveromyces lactis (strain ATCC 8585 / CBS 2359 / DSM 70799 / NBRC 1267 / NRRL Y-1140 / WM37) (Yeast)).